We begin with the raw amino-acid sequence, 297 residues long: Counting factor 45-1 (297 aa).

The first 20 residues, 1–20 (MNKLISLLLVCLVAIALVNA), serve as a signal peptide directing secretion. Positions 24–235 (IDFDSDTVNS…SASTGSGSGS (212 aa)) constitute a Ch-type lysozyme domain. Catalysis depends on residues D29, D119, and E121. The N-linked (GlcNAc...) asparagine glycan is linked to N166. The S-G-S motif repeats stretch occupies residues 231–296 (SGSGSSSGSS…GSSSGSGSGS (66 aa)). A disordered region spans residues 231–297 (SGSGSSSGSS…SSSGSGSGSS (67 aa)). Over residues 234 to 275 (GSSSGSSSGSSSGSSSGSGSSSGSGSSSGSSSGSGSGSSSSG) the composition is skewed to low complexity. Gly residues predominate over residues 276-297 (SGSGSGSSSGSGSSSGSGSGSS).

This sequence belongs to the glycosyl hydrolase 25 family. As to quaternary structure, monomer. Component of the counting factor (CF) complex, which includes cf60, cf50, cf45-1 and ctnA.

The protein localises to the secreted. Functionally, cell-counting factor that limits the maximum size of the multicellular structure during aggregation. In Dictyostelium discoideum (Social amoeba), this protein is Counting factor 45-1 (cf45-1).